We begin with the raw amino-acid sequence, 470 residues long: Sorting nexin-17 (470 aa).

Positions 1-109 (MHFSIPETES…SFLRRAQQET (109 aa)) constitute a PX domain. A 1,2-diacyl-sn-glycero-3-phospho-(1D-myo-inositol-3-phosphate) contacts are provided by Arg36, Ser38, Lys62, and Arg75. The region spanning 115–206 (EEVSLEVLLS…YKIVLRKSYW (92 aa)) is the Ras-associating domain. An FERM-like region spans residues 115 to 432 (EEVSLEVLLS…DASRESMVKL (318 aa)). A PTB-like F3 module region spans residues 270-432 (GYLRFDACVA…DASRESMVKL (163 aa)). Phosphoserine is present on residues Ser336, Ser407, Ser409, Ser415, Ser421, Ser437, and Ser440. The tract at residues 401–426 (GGTLRRSDSQQAVKSPPLLESPDASR) is disordered.

It belongs to the sorting nexin family. Monomer. Interacts with APP (via cytoplasmic YXNPXY motif). Interacts with KIF1B. Interacts with the C-termini of P-selectin, PTC, LDLR, VLDLR, LRP1 and LRP8. Interacts with KRIT1 (via N-terminus). Interacts with HRAS. Interacts with ITGB1 and ITGB5 (via NPxY motif). Interacts with CCDC22 and CCDC93; the interaction associates SNX17 with the CCC complex. Interacts (via C-terminus) with VPS26C and VPS35L; the interactions are direct and associate SNX17 with the retriever complex. Detected in brain neurons (at protein level). Broadly expressed, with highest levels in brain and placenta, and lowest levels in colon, intestine and liver.

The protein localises to the cytoplasm. The protein resides in the early endosome. It localises to the cytoplasmic vesicle membrane. Functionally, critical regulator of endosomal recycling of numerous surface proteins, including integrins, signaling receptor and channels. Binds to NPxY sequences in the cytoplasmic tails of target cargos. Associates with retriever and CCC complexes to prevent lysosomal degradation and promote cell surface recycling of numerous cargos such as integrins ITGB1, ITGB5 and their associated alpha subunits. Also required for maintenance of normal cell surface levels of APP and LRP1. Interacts with membranes containing phosphatidylinositol 3-phosphate (PtdIns(3P)). The protein is Sorting nexin-17 (Snx17) of Mus musculus (Mouse).